We begin with the raw amino-acid sequence, 273 residues long: Imidazole glycerol phosphate synthase subunit HisF (273 aa).

Residues D11 and D134 contribute to the active site.

It belongs to the HisA/HisF family. In terms of assembly, heterodimer of HisH and HisF.

Its subcellular location is the cytoplasm. It carries out the reaction 5-[(5-phospho-1-deoxy-D-ribulos-1-ylimino)methylamino]-1-(5-phospho-beta-D-ribosyl)imidazole-4-carboxamide + L-glutamine = D-erythro-1-(imidazol-4-yl)glycerol 3-phosphate + 5-amino-1-(5-phospho-beta-D-ribosyl)imidazole-4-carboxamide + L-glutamate + H(+). It participates in amino-acid biosynthesis; L-histidine biosynthesis; L-histidine from 5-phospho-alpha-D-ribose 1-diphosphate: step 5/9. Functionally, IGPS catalyzes the conversion of PRFAR and glutamine to IGP, AICAR and glutamate. The HisF subunit catalyzes the cyclization activity that produces IGP and AICAR from PRFAR using the ammonia provided by the HisH subunit. This chain is Imidazole glycerol phosphate synthase subunit HisF, found in Methanosarcina mazei (strain ATCC BAA-159 / DSM 3647 / Goe1 / Go1 / JCM 11833 / OCM 88) (Methanosarcina frisia).